The following is a 261-amino-acid chain: Ribosomal RNA small subunit methyltransferase A (261 aa).

S-adenosyl-L-methionine-binding residues include Asn20, Leu22, Gly47, Glu68, Asp90, and Asn110.

It belongs to the class I-like SAM-binding methyltransferase superfamily. rRNA adenine N(6)-methyltransferase family. RsmA subfamily.

The protein localises to the cytoplasm. It carries out the reaction adenosine(1518)/adenosine(1519) in 16S rRNA + 4 S-adenosyl-L-methionine = N(6)-dimethyladenosine(1518)/N(6)-dimethyladenosine(1519) in 16S rRNA + 4 S-adenosyl-L-homocysteine + 4 H(+). In terms of biological role, specifically dimethylates two adjacent adenosines (A1518 and A1519) in the loop of a conserved hairpin near the 3'-end of 16S rRNA in the 30S particle. May play a critical role in biogenesis of 30S subunits. The polypeptide is Ribosomal RNA small subunit methyltransferase A (Prosthecochloris aestuarii (strain DSM 271 / SK 413)).